A 396-amino-acid chain; its full sequence is Elongation factor Tu 1 (396 aa).

One can recognise a tr-type G domain in the interval 10-206; sequence KPHCNIGTIG…AVDAYIPQPE (197 aa). Residues 19-26 are G1; that stretch reads GHVDHGKT. 19 to 26 contributes to the GTP binding site; the sequence is GHVDHGKT. T26 contributes to the Mg(2+) binding site. Positions 60-64 are G2; the sequence is GITIS. A G3 region spans residues 81–84; it reads DCPG. Residues 81–85 and 136–139 each bind GTP; these read DCPGH and NKCD. Residues 136–139 are G4; sequence NKCD. Positions 174–176 are G5; that stretch reads SAL.

The protein belongs to the TRAFAC class translation factor GTPase superfamily. Classic translation factor GTPase family. EF-Tu/EF-1A subfamily. As to quaternary structure, monomer.

It is found in the cytoplasm. It carries out the reaction GTP + H2O = GDP + phosphate + H(+). In terms of biological role, GTP hydrolase that promotes the GTP-dependent binding of aminoacyl-tRNA to the A-site of ribosomes during protein biosynthesis. This is Elongation factor Tu 1 from Rhodopseudomonas palustris (strain BisB5).